Reading from the N-terminus, the 291-residue chain is Cilia- and flagella-associated protein 298 (291 aa).

The protein belongs to the CFAP298 family.

The protein is Cilia- and flagella-associated protein 298 of Drosophila melanogaster (Fruit fly).